The sequence spans 1206 residues: DNA-directed RNA polymerase subunit beta' (1206 aa).

Zn(2+) is bound by residues C60, C62, C75, and C78. D449, D451, and D453 together coordinate Mg(2+). C822, C896, C903, and C906 together coordinate Zn(2+).

It belongs to the RNA polymerase beta' chain family. In terms of assembly, the RNAP catalytic core consists of 2 alpha, 1 beta, 1 beta' and 1 omega subunit. When a sigma factor is associated with the core the holoenzyme is formed, which can initiate transcription. The cofactor is Mg(2+). Zn(2+) serves as cofactor.

The catalysed reaction is RNA(n) + a ribonucleoside 5'-triphosphate = RNA(n+1) + diphosphate. DNA-dependent RNA polymerase catalyzes the transcription of DNA into RNA using the four ribonucleoside triphosphates as substrates. The chain is DNA-directed RNA polymerase subunit beta' from Staphylococcus haemolyticus (strain JCSC1435).